The sequence spans 362 residues: Protein MGF 360-2L (362 aa).

Belongs to the asfivirus MGF 360 family.

In terms of biological role, plays a role in virus cell tropism, and may be required for efficient virus replication in macrophages. This is Protein MGF 360-2L from African swine fever virus (strain Badajoz 1971 Vero-adapted) (Ba71V).